Consider the following 291-residue polypeptide: ATP synthase gamma chain (291 aa).

The protein belongs to the ATPase gamma chain family. As to quaternary structure, F-type ATPases have 2 components, CF(1) - the catalytic core - and CF(0) - the membrane proton channel. CF(1) has five subunits: alpha(3), beta(3), gamma(1), delta(1), epsilon(1). CF(0) has three main subunits: a, b and c.

The protein resides in the cell membrane. Its function is as follows. Produces ATP from ADP in the presence of a proton gradient across the membrane. The gamma chain is believed to be important in regulating ATPase activity and the flow of protons through the CF(0) complex. The sequence is that of ATP synthase gamma chain from Streptococcus equi subsp. equi (strain 4047).